Consider the following 354-residue polypeptide: Homer protein homolog 1 (354 aa).

Positions 1 to 110 (MGEQPIFSTR…EKFQEFKEAA (110 aa)) constitute a WH1 domain. At Gly-2 the chain carries N-acetylglycine. The interval 114 to 172 (KEKSQEKMELTSTPSQESAGGDLQSPLTPESINGTDDERTPDLTQNSEPRPEPTQNALP) is disordered. Composition is skewed to polar residues over residues 138-147 (SPLTPESING) and 155-172 (DLTQ…NALP). A coiled-coil region spans residues 181–352 (KHWEAELATL…LRDNLAKLLE (172 aa)). Residues 290 to 354 (KLQEVEIRNK…DNLAKLLERS (65 aa)) are required for tetramerization. Ser-306 is subject to Phosphoserine.

This sequence belongs to the Homer family. Tetramer; this tetrameric structure is critical for forming the high-order complex with SHANK1, which in turn is necessary for the structural and functional integrity of dendritic spines. Interacts with GRM1, GRM5, ITPR1, DNM3, RYR1, RYR2 and SHANK3. Interacts with IFT57 and OPHN1. Encodes a coiled-coil structure that mediates homo- and heteromultimerization. Interacts with SHANK1; forms high-order polymerized complex with a mesh-like network structure, at least composed of SHANK1, HOMER1 and DLGAP1; the complex formation is SHANK1 multimerization dependent. Interacts with NFATC4. Interacts with DAGLA (via PPXXF motif); this interaction is required for the cell membrane localization of DAGLA. Interacts with SRGAP2.

It localises to the cytoplasm. It is found in the postsynaptic density. The protein resides in the synapse. Its subcellular location is the cell projection. The protein localises to the dendritic spine. Its function is as follows. Postsynaptic density scaffolding protein. Binds and cross-links cytoplasmic regions of GRM1, GRM5, ITPR1, DNM3, RYR1, RYR2, SHANK1 and SHANK3. By physically linking GRM1 and GRM5 with ER-associated ITPR1 receptors, it aids the coupling of surface receptors to intracellular calcium release. May also couple GRM1 to PI3 kinase through its interaction with AGAP2. Forms a high-order complex with SHANK1, which in turn is necessary for the structural and functional integrity of dendritic spines. Negatively regulates T cell activation by inhibiting the calcineurin-NFAT pathway. Acts by competing with calcineurin/PPP3CA for NFAT protein binding, hence preventing NFAT activation by PPP3CA. This is Homer protein homolog 1 from Bos taurus (Bovine).